The primary structure comprises 105 residues: Nitrogenase-stabilizing/protective protein NifW 1 (105 aa).

This sequence belongs to the NifW family. In terms of assembly, homotrimer; associates with NifD.

May protect the nitrogenase Fe-Mo protein from oxidative damage. The sequence is that of Nitrogenase-stabilizing/protective protein NifW 1 from Trichormus variabilis (strain ATCC 29413 / PCC 7937) (Anabaena variabilis).